A 78-amino-acid chain; its full sequence is Protein DsvD (78 aa).

This sequence to A.fulgidus DsrD.

Functionally, may play an essential role in dissimilatory sulfite reduction. The polypeptide is Protein DsvD (dsvD) (Nitratidesulfovibrio vulgaris (strain ATCC 29579 / DSM 644 / CCUG 34227 / NCIMB 8303 / VKM B-1760 / Hildenborough) (Desulfovibrio vulgaris)).